The primary structure comprises 162 residues: Probable chemoreceptor glutamine deamidase CheD (162 aa).

The protein belongs to the CheD family.

It catalyses the reaction L-glutaminyl-[protein] + H2O = L-glutamyl-[protein] + NH4(+). Probably deamidates glutamine residues to glutamate on methyl-accepting chemotaxis receptors (MCPs), playing an important role in chemotaxis. In Clostridium botulinum (strain ATCC 19397 / Type A), this protein is Probable chemoreceptor glutamine deamidase CheD.